The following is a 1580-amino-acid chain: Transcriptional activator GLI3 (1580 aa).

Residue Met1 is modified to N-acetylmethionine. 2 stretches are compositionally biased toward polar residues: residues 1-10 (MEAQSHSSTT) and 58-78 (ITMQPQNVQGLSKVSEEPSTS). The disordered stretch occupies residues 1 to 79 (MEAQSHSSTT…KVSEEPSTSS (79 aa)). The residue at position 175 (Arg175) is an Omega-N-methylarginine. The disordered stretch occupies residues 368 to 475 (QSLGSAFGHS…DKDESKQEPE (108 aa)). Positions 401–427 (NPVQVSSGPSESSQNKPTSESAVSSTG) are enriched in polar residues. Residues Lys438 and Lys462 each participate in a glycyl lysine isopeptide (Lys-Gly) (interchain with G-Cter in SUMO2) cross-link. The segment covering 461-474 (VKEEGDKDESKQEP) has biased composition (basic and acidic residues). 5 consecutive C2H2-type zinc fingers follow at residues 480-505 (TNCHWEGCAREFDTQEQLVHHINNDH), 513-540 (FVCRWLDCSREQKPFKAQYMLVVHMRRH), 546-570 (HKCTFEGCTKAYSRLENLKTHLRSH), 576-601 (YVCEHEGCNKAFSNASDRAKHQNRTH), and 607-632 (YVCKIPGCTKRYTDPSSLRKHVKTVH). A disordered region spans residues 620–728 (DPSSLRKHVK…PISNYSNSGL (109 aa)). Basic and acidic residues predominate over residues 632 to 648 (HGPEAHVTKKQRGDIHP). Ser664 bears the Phosphoserine mark. Basic and acidic residues predominate over residues 684–699 (SKREECLQVKTVKAEK). The span at 703 to 726 (SQPSPGGQSSCSSQQSPISNYSNS) shows a compositional bias: low complexity. The mediates interaction with DZIP1 stretch occupies residues 745–845 (DETPIMDSTI…VDVTMLNMLN (101 aa)). Lys773 is covalently cross-linked (Glycyl lysine isopeptide (Lys-Gly) (interchain with G-Cter in ubiquitin)). A Glycyl lysine isopeptide (Lys-Gly) (interchain with G-Cter in SUMO2); alternate cross-link involves residue Lys779. A Glycyl lysine isopeptide (Lys-Gly) (interchain with G-Cter in ubiquitin); alternate cross-link involves residue Lys779. Residues Lys784 and Lys800 each participate in a glycyl lysine isopeptide (Lys-Gly) (interchain with G-Cter in ubiquitin) cross-link. Phosphoserine; by PKA occurs at positions 849, 865, 877, and 907. The segment covering 863–882 (RSSGISPCFSSRRSSEASQA) has biased composition (low complexity). The disordered stretch occupies residues 863–918 (RSSGISPCFSSRRSSEASQAEGRPQNVSVADSYDPISTDASRRSSEASQSDGLPSL). Polar residues predominate over residues 908–918 (EASQSDGLPSL). 2 positions are modified to phosphoserine; by PKA: Ser980 and Ser1006. The disordered stretch occupies residues 981–1042 (DGGAHGYGRR…PAMATSAEKR (62 aa)).

Belongs to the GLI C2H2-type zinc-finger protein family. In terms of assembly, the full-length GLI3 form (GLI3FL) interacts with SUFU and this interaction regulates the formation of either repressor or activator forms of GLI3. Its association with SUFU is regulated by Hh signaling and dissociation of the SUFU-GLI3 interaction requires the presence of the ciliary motor KIF3A. Interacts with KIF7. The activator form of GLI3 (GLI3A) but not the repressor form (GLI3R) can interact with TRPS1. The phosphorylated form interacts with BTRC. Interacts with ZIC1. Interacts with ZIC3 (via C2H2-type domains 3, 4 and 5); the interaction enhances its transcriptional activity. Interacts with WRD11; the interaction associates EMX1 with GLI3. Interacts with DZIP1; retains GLI3 within the cytoplasm. Phosphorylated on multiple sites by protein kinase A (PKA) and phosphorylation by PKA primes further phosphorylation by CK1 and GSK3. Phosphorylated by DYRK2 (in vitro). Phosphorylation is essential for its proteolytic processing. Post-translationally, transcriptional repressor GLI3R, a C-terminally truncated form, is generated from the full-length GLI3 protein (GLI3FL/GLI3-190) through proteolytic processing. This process requires PKA-primed phosphorylation of GLI3, ubiquitination of GLI3 and the presence of BTRC. GLI3FL is complexed with SUFU in the cytoplasm and is maintained in a neutral state. Without the Hh signal, the SUFU-GLI3 complex is recruited to cilia, leading to the efficient processing of GLI3FL into GLI3R. GLI3R formation leads to its dissociation from SUFU, allowing it to translocate into the nucleus, and repress Hh target genes. When Hh signaling is initiated, SUFU dissociates from GLI3FL and this has two consequences. First, GLI3R production is halted. Second, free GLI3FL translocates to the nucleus, where it is phosphorylated, destabilized, and converted to a transcriptional activator (GLI3A). Phosphorylated in vitro by ULK3.

It is found in the nucleus. It localises to the cytoplasm. Its subcellular location is the cell projection. The protein resides in the cilium. Its function is as follows. Has a dual function as a transcriptional activator and a repressor of the sonic hedgehog (Shh) pathway, and plays a role in limb development. The full-length GLI3 form (GLI3FL) after phosphorylation and nuclear translocation, acts as an activator (GLI3A) while GLI3R, its C-terminally truncated form, acts as a repressor. A proper balance between the GLI3 activator and the repressor GLI3R, rather than the repressor gradient itself or the activator/repressor ratio gradient, specifies limb digit number and identity. In concert with TRPS1, plays a role in regulating the size of the zone of distal chondrocytes, in restricting the zone of PTHLH expression in distal cells and in activating chondrocyte proliferation. Binds to the minimal GLI-consensus sequence 5'-GGGTGGTC-3'. Plays a role in limb and brain development. The sequence is that of Transcriptional activator GLI3 (GLI3) from Pan troglodytes (Chimpanzee).